Consider the following 196-residue polypeptide: Probable nicotinate-nucleotide adenylyltransferase (196 aa).

This sequence belongs to the NadD family.

It carries out the reaction nicotinate beta-D-ribonucleotide + ATP + H(+) = deamido-NAD(+) + diphosphate. It participates in cofactor biosynthesis; NAD(+) biosynthesis; deamido-NAD(+) from nicotinate D-ribonucleotide: step 1/1. Its function is as follows. Catalyzes the reversible adenylation of nicotinate mononucleotide (NaMN) to nicotinic acid adenine dinucleotide (NaAD). The polypeptide is Probable nicotinate-nucleotide adenylyltransferase (Thermotoga petrophila (strain ATCC BAA-488 / DSM 13995 / JCM 10881 / RKU-1)).